A 297-amino-acid chain; its full sequence is 4-hydroxy-tetrahydrodipicolinate synthase (297 aa).

Position 46 (T46) interacts with pyruvate. Y134 (proton donor/acceptor) is an active-site residue. K162 serves as the catalytic Schiff-base intermediate with substrate. I209 provides a ligand contact to pyruvate.

The protein belongs to the DapA family. Homotetramer; dimer of dimers.

It localises to the cytoplasm. It carries out the reaction L-aspartate 4-semialdehyde + pyruvate = (2S,4S)-4-hydroxy-2,3,4,5-tetrahydrodipicolinate + H2O + H(+). It participates in amino-acid biosynthesis; L-lysine biosynthesis via DAP pathway; (S)-tetrahydrodipicolinate from L-aspartate: step 3/4. Functionally, catalyzes the condensation of (S)-aspartate-beta-semialdehyde [(S)-ASA] and pyruvate to 4-hydroxy-tetrahydrodipicolinate (HTPA). This chain is 4-hydroxy-tetrahydrodipicolinate synthase, found in Methanosphaera stadtmanae (strain ATCC 43021 / DSM 3091 / JCM 11832 / MCB-3).